Consider the following 177-residue polypeptide: Large ribosomal subunit protein uL6 (177 aa).

It belongs to the universal ribosomal protein uL6 family. In terms of assembly, part of the 50S ribosomal subunit.

In terms of biological role, this protein binds to the 23S rRNA, and is important in its secondary structure. It is located near the subunit interface in the base of the L7/L12 stalk, and near the tRNA binding site of the peptidyltransferase center. The polypeptide is Large ribosomal subunit protein uL6 (Methylobacillus flagellatus (strain ATCC 51484 / DSM 6875 / VKM B-1610 / KT)).